The following is a 287-amino-acid chain: Alpha-tubulin N-acetyltransferase 2 (287 aa).

Positions 2-193 constitute an N-acetyltransferase domain; it reads VEFAFDIKHL…NNFVLYEGFF (192 aa). Residues 127-140 and 163-172 contribute to the acetyl-CoA site; these read FYVHESRQRCGQGK and SNKMLAFMAK.

The protein belongs to the acetyltransferase ATAT1 family.

It is found in the midbody. The protein localises to the midbody ring. It catalyses the reaction L-lysyl-[alpha-tubulin] + acetyl-CoA = N(6)-acetyl-L-lysyl-[alpha-tubulin] + CoA + H(+). In terms of biological role, specifically acetylates 'Lys-40' in alpha-tubulin on the lumenal side of microtubules. Promotes microtubule destabilization and accelerates microtubule dynamics; this activity may be independent of acetylation activity. Acetylates alpha-tubulin with a slow enzymatic rate, due to a catalytic site that is not optimized for acetyl transfer. Enters the microtubule through each end and diffuses quickly throughout the lumen of microtubules. Acetylates only long/old microtubules because of its slow acetylation rate since it does not have time to act on dynamically unstable microtubules before the enzyme is released. Main acetyltransferase responsible for alpha-tubulin 'Lys-40' acetylation in germline cells during the early stages of oogenesis. Required for normal egg chamber separation. This Drosophila melanogaster (Fruit fly) protein is Alpha-tubulin N-acetyltransferase 2.